Here is a 598-residue protein sequence, read N- to C-terminus: Elongation factor 4 (598 aa).

A tr-type G domain is found at 4 to 186; that stretch reads SRLRNFSIIA…EIVKKIPPPK (183 aa). GTP is bound by residues 16–21 and 133–136; these read DHGKST and NKID.

This sequence belongs to the TRAFAC class translation factor GTPase superfamily. Classic translation factor GTPase family. LepA subfamily.

It is found in the cell inner membrane. It carries out the reaction GTP + H2O = GDP + phosphate + H(+). Required for accurate and efficient protein synthesis under certain stress conditions. May act as a fidelity factor of the translation reaction, by catalyzing a one-codon backward translocation of tRNAs on improperly translocated ribosomes. Back-translocation proceeds from a post-translocation (POST) complex to a pre-translocation (PRE) complex, thus giving elongation factor G a second chance to translocate the tRNAs correctly. Binds to ribosomes in a GTP-dependent manner. The protein is Elongation factor 4 of Pelobacter propionicus (strain DSM 2379 / NBRC 103807 / OttBd1).